A 60-amino-acid polypeptide reads, in one-letter code: Large ribosomal subunit protein bL32 (60 aa).

The disordered stretch occupies residues 1 to 25 (MAVQQNKKSPSKRGMHRSHNALNVP). The span at 9–19 (SPSKRGMHRSH) shows a compositional bias: basic residues.

This sequence belongs to the bacterial ribosomal protein bL32 family.

The chain is Large ribosomal subunit protein bL32 from Polaromonas naphthalenivorans (strain CJ2).